A 142-amino-acid polypeptide reads, in one-letter code: Large ribosomal subunit protein uL13 (142 aa).

The protein belongs to the universal ribosomal protein uL13 family. In terms of assembly, part of the 50S ribosomal subunit.

This protein is one of the early assembly proteins of the 50S ribosomal subunit, although it is not seen to bind rRNA by itself. It is important during the early stages of 50S assembly. This Francisella philomiragia subsp. philomiragia (strain ATCC 25017 / CCUG 19701 / FSC 153 / O#319-036) protein is Large ribosomal subunit protein uL13.